A 369-amino-acid polypeptide reads, in one-letter code: Protein-glutamate methylesterase/protein-glutamine glutaminase (369 aa).

The region spanning 6–122 (RAVVADDSHF…SMEMSRLKDQ (117 aa)) is the Response regulatory domain. A 4-aspartylphosphate modification is found at Asp56. A disordered region spans residues 136 to 178 (GATGSRSGTGSDSGTAPTTAGGSATDRRGTGGSSGQTTYVANP). Over residues 138–159 (TGSRSGTGSDSGTAPTTAGGSA) the composition is skewed to low complexity. The 195-residue stretch at 173-367 (TYVANPTLVI…DGVIDTITTE (195 aa)) folds into the CheB-type methylesterase domain. Catalysis depends on residues Ser185, His212, and Asp309.

It belongs to the CheB family. Phosphorylated by CheA. Phosphorylation of the N-terminal regulatory domain activates the methylesterase activity.

It localises to the cytoplasm. The enzyme catalyses [protein]-L-glutamate 5-O-methyl ester + H2O = L-glutamyl-[protein] + methanol + H(+). It carries out the reaction L-glutaminyl-[protein] + H2O = L-glutamyl-[protein] + NH4(+). Involved in chemotaxis. Part of a chemotaxis signal transduction system that modulates chemotaxis in response to various stimuli. Catalyzes the demethylation of specific methylglutamate residues introduced into the chemoreceptors (methyl-accepting chemotaxis proteins or MCP) by CheR. Also mediates the irreversible deamidation of specific glutamine residues to glutamic acid. The polypeptide is Protein-glutamate methylesterase/protein-glutamine glutaminase (Haloarcula marismortui (strain ATCC 43049 / DSM 3752 / JCM 8966 / VKM B-1809) (Halobacterium marismortui)).